The sequence spans 372 residues: THAP domain-containing protein 5 (372 aa).

The THAP-type zinc finger occupies 1 to 85 (MTRYCAATRC…LKPNAIPTLF (85 aa)). Residues 306–362 (TDRHYLRQKIAKLQSKIAVLEAQENATLSRLRLLESVIAKLKQENLLSDEKLKILEN) are a coiled coil.

Its subcellular location is the nucleus. The chain is THAP domain-containing protein 5 (thap5) from Xenopus laevis (African clawed frog).